An 874-amino-acid polypeptide reads, in one-letter code: Probable inorganic carbon transporter subunit DabA (874 aa).

Zn(2+) is bound by residues C398, D400, H580, and C595.

It belongs to the inorganic carbon transporter (TC 9.A.2) DabA family. Forms a complex with DabB. Zn(2+) serves as cofactor.

The protein resides in the cell membrane. Its function is as follows. Part of an energy-coupled inorganic carbon pump. The sequence is that of Probable inorganic carbon transporter subunit DabA from Bacillus cytotoxicus (strain DSM 22905 / CIP 110041 / 391-98 / NVH 391-98).